The chain runs to 1998 residues: Histone acetyltransferase KAT6A (1998 aa).

Residues Met-1 to Pro-77 form the SAMD1-like winged helix (WH) domain. The required for activation of RUNX1-1 stretch occupies residues Met-1–His-144. A required for nuclear localization region spans residues Glu-52–Leu-166. A disordered region spans residues Lys-72–Asn-93. An H15 domain is found at Gln-95–Thr-171. The interaction with PML stretch occupies residues His-144–Asp-662. Position 172 is an N6-acetyllysine (Lys-172). 2 PHD-type zinc fingers span residues Asp-199–Gln-258 and Leu-255–Ile-306. An interaction with RUNX1-1 region spans residues Pro-312–Asp-662. A disordered region spans residues Gly-336–Ser-377. N6-acetyllysine occurs at positions 350 and 355. Position 369 is a phosphothreonine; by PKB/AKT1 (Thr-369). Phosphoserine is present on Ser-419. The disordered stretch occupies residues Lys-440 to Ser-464. Residues Lys-444 to Gly-457 are compositionally biased toward polar residues. Position 471 is a phosphoserine (Ser-471). The catalytic stretch occupies residues Ile-486–Pro-776. Residues Pro-502 to Pro-776 form the MYST-type HAT domain. The segment at Arg-505 to Glu-808 is mediates interaction with BRPF1, required for histone H3 acetyltransferase activity. The C2HC MYST-type zinc finger occupies Leu-535–Trp-560. Lys-602 carries the post-translational modification N6-acetyllysine; by autocatalysis. Acetyl-CoA-binding positions include Ser-643–Ile-647 and Gln-652–Arg-658. Catalysis depends on Glu-678, which acts as the Proton donor/acceptor. Ser-682 is a binding site for acetyl-CoA. The interval Val-783–Arg-947 is disordered. Residue Ser-785 is modified to Phosphoserine. The span at Ser-785–Lys-797 shows a compositional bias: acidic residues. The span at Glu-798 to Glu-840 shows a compositional bias: basic and acidic residues. Residue Lys-815 is modified to N6-acetyllysine. Lys-835 participates in a covalent cross-link: Glycyl lysine isopeptide (Lys-Gly) (interchain with G-Cter in SUMO2). Basic residues predominate over residues Arg-865–Arg-874. Residues Lys-875 to Lys-886 show a composition bias toward basic and acidic residues. Tyr-900 carries the post-translational modification Phosphotyrosine. The span at Cys-903–Glu-916 shows a compositional bias: basic and acidic residues. Phosphoserine occurs at positions 940 and 953. The segment at Gly-982–Phe-1079 is disordered. An N6-acetyllysine modification is found at Lys-1006. A compositionally biased stretch (basic residues) spans Thr-1008–Asn-1029. The segment covering Ser-1030–Thr-1041 has biased composition (low complexity). Composition is skewed to acidic residues over residues Glu-1042–Asp-1052 and Phe-1064–Glu-1077. Ser-1088, Ser-1089, and Ser-1114 each carry phosphoserine. 4 disordered regions span residues Gln-1096 to Lys-1175, Pro-1195 to Tyr-1436, Gln-1450 to Gly-1567, and Thr-1630 to Asn-1702. Residues Asp-1106–Asp-1119 show a composition bias toward acidic residues. A compositionally biased stretch (polar residues) spans Asn-1135 to Pro-1146. Positions Met-1147–Gly-1173 are enriched in basic residues. Over residues Arg-1203–Glu-1228 the composition is skewed to basic and acidic residues. Composition is skewed to acidic residues over residues Ala-1229–Ala-1240 and Glu-1281–Thr-1298. 3 stretches are compositionally biased toward basic and acidic residues: residues His-1316–Asp-1333, Asp-1351–Asp-1360, and Asp-1392–Leu-1413. The segment covering His-1472–Pro-1496 has biased composition (low complexity). A compositionally biased stretch (polar residues) spans Gly-1501–Thr-1522. Residues Gly-1510–Arg-1635 form an interaction with RUNX1-2 region. The interval Gly-1510–Ala-1735 is interaction with PML. The segment covering Asp-1527–Ser-1541 has biased composition (low complexity). Polar residues predominate over residues Ile-1549–Gly-1567. Pro residues-rich tracts occupy residues Asn-1639 to Gln-1658 and Pro-1665 to Gln-1693. A required for activation of RUNX1-2 region spans residues Ser-1907–Gln-1942.

Belongs to the MYST (SAS/MOZ) family. In terms of assembly, component of the MOZ/MORF complex composed at least of ING5, KAT6A, KAT6B, MEAF6 and one of BRPF1, BRD1/BRPF2 and BRPF3. Interacts with RUNX1; phosphorylation of RUNX1 enhances the interaction. Interacts with RUNX2. Interacts with p53/TP53. Interacts with PML and this interaction positively regulates its acetylation activity towards p53/TP53. Autoacetylated. Autoacetylation at Lys-602 is required for proper function. In terms of processing, phosphorylation at Thr-369 by PKB/AKT1 inhibits its interaction with PML and negatively regulates its acetylation activity towards p53/TP53.

The protein localises to the nucleus. Its subcellular location is the nucleolus. The protein resides in the nucleoplasm. It localises to the PML body. The enzyme catalyses L-lysyl-[protein] + acetyl-CoA = N(6)-acetyl-L-lysyl-[protein] + CoA + H(+). Histone acetyltransferase that acetylates lysine residues in histone H3 and histone H4 (in vitro). Component of the MOZ/MORF complex which has a histone H3 acetyltransferase activity. May act as a transcriptional coactivator for RUNX1 and RUNX2. Acetylates p53/TP53 at 'Lys-120' and 'Lys-382' and controls its transcriptional activity via association with PML. The sequence is that of Histone acetyltransferase KAT6A (Kat6a) from Rattus norvegicus (Rat).